Here is a 422-residue protein sequence, read N- to C-terminus: Electron transfer flavoprotein subunit alpha (422 aa).

The interval 61–80 is disordered; sequence KRIDRSGTQQGAGGGKASAS. Residues 329–330, 343–347, 360–367, and asparagine 381 each bind FAD; these read SR, QVGAT, and GISGAIQH.

It belongs to the ETF alpha-subunit/FixB family. Heterodimer of an alpha and a beta subunit. FAD is required as a cofactor.

Functionally, participates in the electron transfer process during N,N-dimethylglycine (DMG) degradation to sarcosine. The polypeptide is Electron transfer flavoprotein subunit alpha (Chromohalobacter salexigens (strain ATCC BAA-138 / DSM 3043 / CIP 106854 / NCIMB 13768 / 1H11)).